A 334-amino-acid polypeptide reads, in one-letter code: N-acetyl-gamma-glutamyl-phosphate reductase (334 aa).

Cys-154 is a catalytic residue.

Belongs to the NAGSA dehydrogenase family. Type 1 subfamily.

It is found in the cytoplasm. It catalyses the reaction N-acetyl-L-glutamate 5-semialdehyde + phosphate + NADP(+) = N-acetyl-L-glutamyl 5-phosphate + NADPH + H(+). It participates in amino-acid biosynthesis; L-arginine biosynthesis; N(2)-acetyl-L-ornithine from L-glutamate: step 3/4. Catalyzes the NADPH-dependent reduction of N-acetyl-5-glutamyl phosphate to yield N-acetyl-L-glutamate 5-semialdehyde. The chain is N-acetyl-gamma-glutamyl-phosphate reductase from Shigella flexneri.